A 410-amino-acid polypeptide reads, in one-letter code: Peptidase T (410 aa).

Zn(2+) is bound at residue His-79. Residue Asp-81 is part of the active site. Residue Asp-142 participates in Zn(2+) binding. Catalysis depends on Glu-176, which acts as the Proton acceptor. Residues Glu-177, Asp-199, and His-381 each contribute to the Zn(2+) site.

It belongs to the peptidase M20B family. Requires Zn(2+) as cofactor.

Its subcellular location is the cytoplasm. The enzyme catalyses Release of the N-terminal residue from a tripeptide.. In terms of biological role, cleaves the N-terminal amino acid of tripeptides. The chain is Peptidase T from Bacillus cereus (strain G9842).